The following is a 475-amino-acid chain: Ribulose bisphosphate carboxylase large chain (475 aa).

Residues Met1 to Ser2 constitute a propeptide that is removed on maturation. N-acetylproline is present on Pro3. The residue at position 14 (Lys14) is an N6,N6,N6-trimethyllysine. Positions 123 and 173 each coordinate substrate. Residue Lys175 is the Proton acceptor of the active site. Lys177 contacts substrate. Mg(2+) contacts are provided by Lys201, Asp203, and Glu204. Lys201 carries the N6-carboxylysine modification. Residue His294 is the Proton acceptor of the active site. Positions 295, 327, and 379 each coordinate substrate.

Belongs to the RuBisCO large chain family. Type I subfamily. In terms of assembly, heterohexadecamer of 8 large chains and 8 small chains; disulfide-linked. The disulfide link is formed within the large subunit homodimers. Requires Mg(2+) as cofactor. The disulfide bond which can form in the large chain dimeric partners within the hexadecamer appears to be associated with oxidative stress and protein turnover.

The protein localises to the plastid. It is found in the chloroplast. The catalysed reaction is 2 (2R)-3-phosphoglycerate + 2 H(+) = D-ribulose 1,5-bisphosphate + CO2 + H2O. It catalyses the reaction D-ribulose 1,5-bisphosphate + O2 = 2-phosphoglycolate + (2R)-3-phosphoglycerate + 2 H(+). In terms of biological role, ruBisCO catalyzes two reactions: the carboxylation of D-ribulose 1,5-bisphosphate, the primary event in carbon dioxide fixation, as well as the oxidative fragmentation of the pentose substrate in the photorespiration process. Both reactions occur simultaneously and in competition at the same active site. The chain is Ribulose bisphosphate carboxylase large chain from Magnolia acuminata (Cucumber tree).